A 395-amino-acid polypeptide reads, in one-letter code: S-adenosylmethionine synthase (395 aa).

An ATP-binding site is contributed by His16. Asp18 serves as a coordination point for Mg(2+). K(+) is bound at residue Glu44. L-methionine-binding residues include Glu57 and Gln100. Residues 100 to 110 (QSPDIAQGVDR) are flexible loop. ATP contacts are provided by residues 167-169 (DAK), 233-234 (RF), Asp242, 248-249 (RK), Ala265, and Lys269. Asp242 provides a ligand contact to L-methionine. Residue Lys273 participates in L-methionine binding.

Belongs to the AdoMet synthase family. In terms of assembly, homotetramer; dimer of dimers. Requires Mg(2+) as cofactor. K(+) serves as cofactor.

The protein resides in the cytoplasm. The enzyme catalyses L-methionine + ATP + H2O = S-adenosyl-L-methionine + phosphate + diphosphate. It functions in the pathway amino-acid biosynthesis; S-adenosyl-L-methionine biosynthesis; S-adenosyl-L-methionine from L-methionine: step 1/1. Its function is as follows. Catalyzes the formation of S-adenosylmethionine (AdoMet) from methionine and ATP. The overall synthetic reaction is composed of two sequential steps, AdoMet formation and the subsequent tripolyphosphate hydrolysis which occurs prior to release of AdoMet from the enzyme. The polypeptide is S-adenosylmethionine synthase (Burkholderia thailandensis (strain ATCC 700388 / DSM 13276 / CCUG 48851 / CIP 106301 / E264)).